The following is a 112-amino-acid chain: uncharacterized protein (112 aa).

To M.jannaschii MJ1244 and M.thermoautotrophicum MTH1110.

This is an uncharacterized protein from Methanocaldococcus jannaschii (strain ATCC 43067 / DSM 2661 / JAL-1 / JCM 10045 / NBRC 100440) (Methanococcus jannaschii).